Consider the following 162-residue polypeptide: Anaerobic nitrite reductase GLB1 (162 aa).

Positions 9 to 159 (VFSEEKEALV…LVAAIKQEMK (151 aa)) constitute a Globin domain. Positions 42 to 46 (EIAPS) match the Homodimerization motif. Heme b contacts are provided by Lys-66, His-70, Arg-100, Thr-104, and His-105. The short motif at 112–124 (DGHFEVTRFALLE) is the Homodimerization element.

It belongs to the plant globin family. As to quaternary structure, homodimer. Requires heme b as cofactor. In terms of tissue distribution, seeds and roots.

The protein resides in the cytoplasm. Its subcellular location is the nucleus. It catalyses the reaction Fe(III)-heme b-[protein] + nitric oxide + H2O = Fe(II)-heme b-[protein] + nitrite + 2 H(+). Phytoglobin that reduces nitrite to nitric oxide (NO) under anoxic conditions (e.g. during flooding or in waterlogged soil). May not function as an oxygen storage or transport protein. Has an unusually high affinity for O(2) through an hexacoordinate heme iron because of a very low dissociation constant. The protein is Anaerobic nitrite reductase GLB1 of Hordeum vulgare (Barley).